Here is a 354-residue protein sequence, read N- to C-terminus: MLHVGINGFGTIGKRVADAVRVQPDMTVAGVAKRSPNFEATIADDRGYDLYAADGREPFDEADLGTAGTVHDLIETSDVVVDTTPSGVGAANASLYAEHDTPAIFQGGEDADVADVSFNARANYEKAVGADTARVVSCNTTGLSRLLAPLRESYGVEKSRVTLVRRGADPGQTGRGPINDTLPDPVEIPSHHGPDVQTIFPDLDIDTMGMKVPTTQMHTHSVNVTLESEPATEEVTALLADESRLFLIPETLGIDGAGKLKEYTRDAGRPRGDVWENCIWAESITVEGRDLYLFQAIHQEADVVPENIDAVRALSERTASAEKSIRRTDEALGVGRGLVEHDGSPQRVDSHADD.

Residues 11–12 (TI) and Gly-108 contribute to the NAD(+) site. 137-139 (SCN) contributes to the D-glyceraldehyde 3-phosphate binding site. Cys-138 acts as the Nucleophile in catalysis. NAD(+) is bound at residue Arg-166. 192-193 (HG) serves as a coordination point for D-glyceraldehyde 3-phosphate. Gln-299 lines the NAD(+) pocket.

The protein belongs to the glyceraldehyde-3-phosphate dehydrogenase family. In terms of assembly, homotetramer.

The protein resides in the cytoplasm. It carries out the reaction D-glyceraldehyde 3-phosphate + phosphate + NADP(+) = (2R)-3-phospho-glyceroyl phosphate + NADPH + H(+). The catalysed reaction is D-glyceraldehyde 3-phosphate + phosphate + NAD(+) = (2R)-3-phospho-glyceroyl phosphate + NADH + H(+). It participates in carbohydrate degradation; glycolysis; pyruvate from D-glyceraldehyde 3-phosphate: step 1/5. The polypeptide is Glyceraldehyde-3-phosphate dehydrogenase (Haloarcula marismortui (strain ATCC 43049 / DSM 3752 / JCM 8966 / VKM B-1809) (Halobacterium marismortui)).